Reading from the N-terminus, the 401-residue chain is LysM domain-containing GPI-anchored protein LYP4 (401 aa).

The signal sequence occupies residues 1–23 (MPPPLLLLLLLAAAAAAVAPARS). 4 disulfides stabilise this stretch: Cys-30–Cys-96, Cys-36–Cys-162, Cys-94–Cys-160, and Cys-96–Cys-162. 2 consecutive LysM domains span residues 106-156 (VRYV…TLFV) and 175-218 (LTYV…IIVV). 2 disulfides stabilise this stretch: Cys-223–Cys-255 and Cys-250–Cys-279. Asn-240 carries an N-linked (GlcNAc...) asparagine glycan. N-linked (GlcNAc...) asparagine glycans are attached at residues Asn-281, Asn-288, and Asn-310. Ser-373 is lipidated: GPI-anchor amidated serine. Positions 374-401 (SGPPPAGRHVVGDVLGAFALCLVGNLLW) are cleaved as a propeptide — removed in mature form.

In terms of assembly, interacts with LYP6. Interacts with CEBIP. Interacts with CERK1. In terms of tissue distribution, expressed in roots and leaves.

Its subcellular location is the cell membrane. Functionally, functions in innate immunity. Functions as a pattern recognition receptor (PRR), sensing bacterial peptidoglycan (PGN) and fungal chitin at the cell surface. Involved in resistance against the bacterial pathogen Xanthomonas oryzae pv. oryzae (Xoo) and the fungal pathogen Magnaporthe oryzae. Binds PGN and fungal chitin in vitro. Involved in microbe-associated molecular patterns (MAMPs) perception and participates in the activation of defense genes against the bacterial pathogen Xanthomonas oryzae pv. oryzicola (Xoc) or the fungal pathogen Magnaporthe oryzae. In Oryza sativa subsp. japonica (Rice), this protein is LysM domain-containing GPI-anchored protein LYP4.